The chain runs to 264 residues: MADSFSLNDALAGSGNPNPQGYPGAWGNQPGAGGYPGAAYPGAYPGQAPPGAYPGQAPPGAYPGQAPPSAYPGPTAPGAYPGPTAPGAYPGQPAPGAFPGQPGAPGAYPQCSGGYPAAGPYGVPAGPLTVPYDLPLPGGVMPRMLITIMGTVKPNANRIVLDFRRGNDVAFHFNPRFNENNRRVIVCNTKQDNNWGKEERQSAFPFESGKPFKIQVLVEADHFKVAVNDAHLLQYNHRMKNLREISQLGISGDITLTSANHAMI.

The tract at residues 1-105 is disordered; it reads MADSFSLNDA…GAFPGQPGAP (105 aa). Residue Ala2 is modified to N-acetylalanine. Phosphoserine; by CK1 is present on Ser6. 8 repeat units span residues 35-43, 44-52, 53-61, 62-70, 71-79, 80-88, 89-97, and 98-107. The segment at 35 to 114 is 9 X 9 AA tandem repeats of Y-P-G-X(3)-P-[GS]-A; it reads YPGAAYPGAY…PGAYPQCSGG (80 aa). Residues 37–46 are compositionally biased toward low complexity; sequence GAAYPGAYPG. The span at 47–75 shows a compositional bias: pro residues; the sequence is QAPPGAYPGQAPPGAYPGQAPPSAYPGPT. Low complexity predominate over residues 76–105; it reads APGAYPGPTAPGAYPGQPAPGAFPGQPGAP. One copy of the 9; truncated repeat lies at 108-114; sequence YPQCSGG. Positions 132–262 constitute a Galectin domain; the sequence is YDLPLPGGVM…DITLTSANHA (131 aa). 195 to 201 contacts a beta-D-galactoside; the sequence is WGKEERQ. Residue Ser202 is modified to Phosphoserine. The short motif at 240–255 is the Nuclear export signal element; that stretch reads KNLREISQLGISGDIT.

In terms of assembly, probably forms homo- or heterodimers. Interacts with DMBT1. Interacts with CD6 and ALCAM. Forms a complex with the ITGA3, ITGB1 and CSPG4. Interacts with LGALS3BP, LYPD3, ZFTRAF1 and UACA. Interacts with TRIM16; this interaction mediates autophagy of damage endomembranes. Interacts with and inhibits by binding NCR3/NKp30. In terms of tissue distribution, the highest levels are found in activated macrophages.

The protein localises to the cytoplasm. It localises to the nucleus. The protein resides in the secreted. Its function is as follows. Galactose-specific lectin which binds IgE. May mediate with the alpha-3, beta-1 integrin the stimulation by CSPG4 of endothelial cells migration. Together with DMBT1, required for terminal differentiation of columnar epithelial cells during early embryogenesis. In the nucleus: acts as a pre-mRNA splicing factor. Involved in acute inflammatory responses including neutrophil activation and adhesion, chemoattraction of monocytes macrophages, opsonization of apoptotic neutrophils, and activation of mast cells. Together with TRIM16, coordinates the recognition of membrane damage with mobilization of the core autophagy regulators ATG16L1 and BECN1 in response to damaged endomembranes. When secreted, interacts with NK cell-activating receptor NCR3/NKp30 acting as an inhibitory ligand which antagonizes NK cell attack. This is Galectin-3 (Lgals3) from Mus musculus (Mouse).